The following is an 84-amino-acid chain: U21-theraphotoxin-Cg1b (84 aa).

Residues 1–21 (MKVSVLITLAVLGVMFLLTSA) form the signal peptide. The propeptide occupies 22–47 (EERGSDQMDSPAWLKSMERIFQSEER). Intrachain disulfides connect C49–C63, C56–C68, and C62–C76. The residue at position 82 (F82) is a Phenylalanine amide.

This sequence belongs to the neurotoxin 10 (Hwtx-1) family. 05 (F4a) subfamily. Expressed by the venom gland.

The protein resides in the secreted. In terms of biological role, probable ion channel inhibitor. In Chilobrachys guangxiensis (Chinese earth tiger tarantula), this protein is U21-theraphotoxin-Cg1b.